The sequence spans 71 residues: Large ribosomal subunit protein uL30 (71 aa).

Belongs to the universal ribosomal protein uL30 family. In terms of assembly, part of the 50S ribosomal subunit.

This chain is Large ribosomal subunit protein uL30, found in Mycobacterium leprae (strain TN).